Here is a 219-residue protein sequence, read N- to C-terminus: MNETAKKLLVTGATELGLHLTSAQLGNFYTYASELTKWSKKINLTAIKTDEEIALKHFVDSLTLAKVVKNKGRLLDIGSGGGFPAIPLKIVLHDLHVMSVDAVEKKVIFQRHVARLLHLHDFEAVHVRGEELAKSHAGQFDWIVSRAFSDIPTFAAMTLPLLKSDGRLIAMKGRGGRDEAEAAKGALDDLGARIAELLEFRLPVSGDSRYLVVMEKVAD.

S-adenosyl-L-methionine contacts are provided by residues Gly78, Phe83, Gly129–Glu130, and Arg146.

It belongs to the methyltransferase superfamily. RNA methyltransferase RsmG family.

Its subcellular location is the cytoplasm. It catalyses the reaction guanosine(527) in 16S rRNA + S-adenosyl-L-methionine = N(7)-methylguanosine(527) in 16S rRNA + S-adenosyl-L-homocysteine. Specifically methylates the N7 position of guanine in position 527 of 16S rRNA. In Geotalea uraniireducens (strain Rf4) (Geobacter uraniireducens), this protein is Ribosomal RNA small subunit methyltransferase G.